Reading from the N-terminus, the 276-residue chain is Protein canopy homolog 3 (276 aa).

Positions 1–26 (MESMSELAPRCLLFPLLLLLPLLLLP) are cleaved as a signal peptide. Positions 47–269 (SKCEVCKYVA…EGVQKASPLP (223 aa)) constitute a Saposin B-type domain. 3 disulfide bridges follow: Cys-49–Cys-206, Cys-52–Cys-194, and Cys-104–Cys-166. Asn-153 carries N-linked (GlcNAc...) asparagine glycosylation. A coiled-coil region spans residues 153–179 (NETSAEVADLKKQCDVLVEEFEEVIED). Residues 218-276 (IASLGGKKSKKKRSGVKGSSSGSSKQRKELGGLGEDANAEEEEGVQKASPLPHSPPDEL) are disordered.

This sequence belongs to the canopy family. In terms of assembly, interacts with HSP90B1; this interaction is disrupted in the presence of ATP. Interacts with TLR1, TLR2, TLR4 and TLR9. Strongest interaction with TLR4.

The protein resides in the endoplasmic reticulum. Functionally, toll-like receptor (TLR)-specific co-chaperone for HSP90B1. Required for proper TLR folding, except that of TLR3, and hence controls TLR exit from the endoplasmic reticulum. Consequently, required for both innate and adaptive immune responses. The polypeptide is Protein canopy homolog 3 (Cnpy3) (Mus musculus (Mouse)).